The sequence spans 446 residues: NADH-ubiquinone oxidoreductase chain 4 (446 aa).

13 helical membrane-spanning segments follow: residues 4-24 (IILF…YWMV), 56-76 (MLSY…LLAS), 93-113 (IVIL…FMFY), 114-134 (LFFE…GYQP), 141-161 (VYLL…IFYV), 182-202 (LLYF…LVHL), 212-232 (PVSG…YGLL), 245-265 (YSFV…LVCL), 272-292 (ALIA…LLTM), 297-317 (LCGS…LFCL), 330-350 (MLIN…WFLL), 373-393 (IVSW…FSAA), and 426-446 (LLHW…ILWL).

This sequence belongs to the complex I subunit 4 family.

The protein localises to the mitochondrion membrane. It carries out the reaction a ubiquinone + NADH + 5 H(+)(in) = a ubiquinol + NAD(+) + 4 H(+)(out). Functionally, core subunit of the mitochondrial membrane respiratory chain NADH dehydrogenase (Complex I) that is believed to belong to the minimal assembly required for catalysis. Complex I functions in the transfer of electrons from NADH to the respiratory chain. The immediate electron acceptor for the enzyme is believed to be ubiquinone. The sequence is that of NADH-ubiquinone oxidoreductase chain 4 (mt:ND4) from Drosophila yakuba (Fruit fly).